Reading from the N-terminus, the 399-residue chain is MTRTVLVLNSGSSSLKFQLLEPDSGASLADGIVERIGEDSSSASLVCGEREVTHSERVPDHEAALRTAYGLFDEAGAELGSVGLVAVGHRVVHGGPDLYQPTLIDDALVDTLESLAPLAPLHNPPAVLGIRGARKAFPDLPHVAVFDTAYFHDLPVAAATYAIDRDLSEQWHIRRYGFHGTSHQYVSEQAALFLDVPLSSLSQIVLHLGNGASASAILGGRPIDTSMGLTPMEGLVMGTRSGDVDPGVLVYLWRTAGMSVDEIETMLNKRSGVRGLGGEIDFRVLHQRIESGDESDRENAQLAYDVYIHRLRKYIGAYLALLGSTDVIVFTAGVGENDAAVRRDALSGMGRLGIELDEHLNESPSHTARRISAETSPTTVLVIPTNEELAIARACVEVI.

Asparagine 9 is a Mg(2+) binding site. Lysine 16 is an ATP binding site. Residue arginine 90 coordinates substrate. Aspartate 147 functions as the Proton donor/acceptor in the catalytic mechanism. ATP is bound by residues 207 to 211, 281 to 283, and 333 to 337; these read HLGNG, DFR, and GVGEN. Glutamate 387 contacts Mg(2+).

Belongs to the acetokinase family. In terms of assembly, homodimer. Mg(2+) is required as a cofactor. Mn(2+) serves as cofactor.

It localises to the cytoplasm. It catalyses the reaction acetate + ATP = acetyl phosphate + ADP. The protein operates within metabolic intermediate biosynthesis; acetyl-CoA biosynthesis; acetyl-CoA from acetate: step 1/2. In terms of biological role, catalyzes the formation of acetyl phosphate from acetate and ATP. Can also catalyze the reverse reaction. The polypeptide is Acetate kinase (Mycobacterium sp. (strain KMS)).